A 197-amino-acid polypeptide reads, in one-letter code: Probable GTP-binding protein EngB (197 aa).

Positions 22–195 (GFPEIGLAGR…WQWIEAHTVG (174 aa)) constitute an EngB-type G domain. Residues 30 to 37 (GRSNVGKS), 57 to 61 (GKTQT), 75 to 78 (DVPG), 142 to 145 (TKSD), and 174 to 176 (FSA) contribute to the GTP site. Residues Ser-37 and Thr-59 each contribute to the Mg(2+) site.

It belongs to the TRAFAC class TrmE-Era-EngA-EngB-Septin-like GTPase superfamily. EngB GTPase family. Requires Mg(2+) as cofactor.

Necessary for normal cell division and for the maintenance of normal septation. This chain is Probable GTP-binding protein EngB, found in Lactiplantibacillus plantarum (strain ATCC BAA-793 / NCIMB 8826 / WCFS1) (Lactobacillus plantarum).